Consider the following 567-residue polypeptide: Zinc finger protein 512 (567 aa).

Residues 1-32 form a disordered region; sequence MSSRLGAVPATSGPTTFKQQRSTRIVGAKNSR. Polar residues predominate over residues 12–23; the sequence is SGPTTFKQQRST. Residues Lys-18 and Lys-84 each participate in a glycyl lysine isopeptide (Lys-Gly) (interchain with G-Cter in SUMO2) cross-link. The disordered stretch occupies residues 86–148; the sequence is AATSHVEGSG…QARRIRKEPP (63 aa). A compositionally biased stretch (basic residues) spans 119–130; it reads KKHKLYGRKQRP. The C2H2-type 1 zinc-finger motif lies at 197–220; it reads FTCHHCGKQLRSLAGMKYHVMANH. Residue Lys-227 forms a Glycyl lysine isopeptide (Lys-Gly) (interchain with G-Cter in SUMO2) linkage. The C2H2-type 2 zinc finger occupies 287–310; that stretch reads LKCHHCGKPYRSKAGLAYHLRSEH. Lys-333 participates in a covalent cross-link: Glycyl lysine isopeptide (Lys-Gly) (interchain with G-Cter in SUMO2). The C2H2-type 3; atypical zinc finger occupies 406-430; sequence IQCPNQGCEAVYSSVSGLKAHLGSC. Residues 440–463 form a C2H2-type 4 zinc finger; sequence YKCLLCQKEFVSESGVKYHINSVH. The tract at residues 486 to 567 is disordered; sequence QRQQEEEKRR…PKTNHKRGRK (82 aa). Residues 495–508 show a composition bias toward basic residues; the sequence is RQQHRSRRSLRRRQ. Basic and acidic residues predominate over residues 523-532; it reads VGKDQRRNNE. Over residues 556–567 the composition is skewed to basic residues; that stretch reads KPPKTNHKRGRK.

It belongs to the krueppel C2H2-type zinc-finger protein family.

It is found in the nucleus. Its function is as follows. May be involved in transcriptional regulation. The polypeptide is Zinc finger protein 512 (ZNF512) (Homo sapiens (Human)).